A 396-amino-acid polypeptide reads, in one-letter code: Inositol hexakisphosphate kinase 3 (396 aa).

206–214 (PCILDLKMG) lines the substrate pocket.

It belongs to the inositol phosphokinase (IPK) family. Highly expressed in cerebellum, brain cortex, kidney, thymus and lung. Detected at lower levels in hippocampus, testis, heart and olfactory bulb.

It localises to the cytoplasm. The catalysed reaction is 1D-myo-inositol hexakisphosphate + ATP = 5-diphospho-1D-myo-inositol 1,2,3,4,6-pentakisphosphate + ADP. It carries out the reaction 1-diphospho-1D-myo-inositol 2,3,4,5,6-pentakisphosphate + ATP + H(+) = 1,5-bis(diphospho)-1D-myo-inositol 2,3,4,6-tetrakisphosphate + ADP. Its function is as follows. Converts inositol hexakisphosphate (InsP6) to diphosphoinositol pentakisphosphate (InsP7/PP-InsP5). Converts 1,3,4,5,6-pentakisphosphate (InsP5) to PP-InsP4. This Mus musculus (Mouse) protein is Inositol hexakisphosphate kinase 3 (Ip6k3).